A 452-amino-acid chain; its full sequence is Glutamyl-tRNA(Gln) amidotransferase subunit A (452 aa).

Catalysis depends on charge relay system residues Lys56 and Ser131. The active-site Acyl-ester intermediate is Ser155.

The protein belongs to the amidase family. GatA subfamily. As to quaternary structure, heterotrimer of A, B and C subunits.

The enzyme catalyses L-glutamyl-tRNA(Gln) + L-glutamine + ATP + H2O = L-glutaminyl-tRNA(Gln) + L-glutamate + ADP + phosphate + H(+). Allows the formation of correctly charged Gln-tRNA(Gln) through the transamidation of misacylated Glu-tRNA(Gln) in organisms which lack glutaminyl-tRNA synthetase. The reaction takes place in the presence of glutamine and ATP through an activated gamma-phospho-Glu-tRNA(Gln). This chain is Glutamyl-tRNA(Gln) amidotransferase subunit A, found in Campylobacter hominis (strain ATCC BAA-381 / DSM 21671 / CCUG 45161 / LMG 19568 / NCTC 13146 / CH001A).